Reading from the N-terminus, the 204-residue chain is MAANGAKGRKVMRVLVVDNYDSFTYNLVQYLGELGAEPIVWRNDRFRLEEVEALDPDRILISPGPCTPFEAGLSVPLVQRYAPRYPILGVCLGHQAIGAAFGGKVVPAPVLMHGKVSPIHHDGTGVFRGLDSPFPATRYHSLAVVEVPEALVVNAWAEEAGGRTVMGFRHRDYPTHGVQFHPESYLTEAGKLILKNFLEDPWTR.

One can recognise a Glutamine amidotransferase type-1 domain in the interval 13-204 (RVLVVDNYDS…KNFLEDPWTR (192 aa)). Residue 64–66 (GPC) coordinates L-glutamine. The active-site Nucleophile; for GATase activity is the Cys-91. L-glutamine contacts are provided by residues Gln-95 and 141–142 (SL). Active-site for GATase activity residues include His-181 and Glu-183.

In terms of assembly, heterotetramer consisting of two non-identical subunits: a beta subunit (TrpG) and a large alpha subunit (TrpE).

The catalysed reaction is chorismate + L-glutamine = anthranilate + pyruvate + L-glutamate + H(+). Its pathway is amino-acid biosynthesis; L-tryptophan biosynthesis; L-tryptophan from chorismate: step 1/5. Its function is as follows. Part of a heterotetrameric complex that catalyzes the two-step biosynthesis of anthranilate, an intermediate in the biosynthesis of L-tryptophan. In the first step, the glutamine-binding beta subunit (TrpG) of anthranilate synthase (AS) provides the glutamine amidotransferase activity which generates ammonia as a substrate that, along with chorismate, is used in the second step, catalyzed by the large alpha subunit of AS (TrpE) to produce anthranilate. In the absence of TrpG, TrpE can synthesize anthranilate directly from chorismate and high concentrations of ammonia. This Thermus thermophilus (strain ATCC 27634 / DSM 579 / HB8) protein is Anthranilate synthase component 2 (trpG).